The chain runs to 152 residues: Small ribosomal subunit protein uS15 (152 aa).

Residues 1–11 show a composition bias toward basic residues; it reads MAKMHTKRKGK. The interval 1–22 is disordered; the sequence is MAKMHTKRKGKSSSTRPIRTEP.

This sequence belongs to the universal ribosomal protein uS15 family. In terms of assembly, part of the 30S ribosomal subunit.

In Methanosarcina barkeri (strain Fusaro / DSM 804), this protein is Small ribosomal subunit protein uS15.